The chain runs to 361 residues: Anthranilate phosphoribosyltransferase (361 aa).

Residues glycine 101, 104 to 105, threonine 109, 111 to 114, 129 to 137, and serine 141 contribute to the 5-phospho-alpha-D-ribose 1-diphosphate site; these read GD, NIST, and KHGNRGVSS. Glycine 101 provides a ligand contact to anthranilate. Serine 113 is a Mg(2+) binding site. Asparagine 132 provides a ligand contact to anthranilate. Residue arginine 187 coordinates anthranilate. The Mg(2+) site is built by aspartate 245 and glutamate 246.

It belongs to the anthranilate phosphoribosyltransferase family. Homodimer. Mg(2+) is required as a cofactor.

The catalysed reaction is N-(5-phospho-beta-D-ribosyl)anthranilate + diphosphate = 5-phospho-alpha-D-ribose 1-diphosphate + anthranilate. Its pathway is amino-acid biosynthesis; L-tryptophan biosynthesis; L-tryptophan from chorismate: step 2/5. Catalyzes the transfer of the phosphoribosyl group of 5-phosphorylribose-1-pyrophosphate (PRPP) to anthranilate to yield N-(5'-phosphoribosyl)-anthranilate (PRA). This Shewanella denitrificans (strain OS217 / ATCC BAA-1090 / DSM 15013) protein is Anthranilate phosphoribosyltransferase.